Reading from the N-terminus, the 335-residue chain is Mycobacterial beta-ketoacyl-[acyl-carrier-protein] synthase III (335 aa).

Catalysis depends on residues C122 and H258. Residues 259–263 (QANSR) are ACP-binding. Residue N289 is part of the active site.

It belongs to the thiolase-like superfamily. FabH family. In terms of assembly, homodimer.

It is found in the cytoplasm. It carries out the reaction malonyl-[ACP] + dodecanoyl-CoA + H(+) = 3-oxotetradecanoyl-[ACP] + CO2 + CoA. It participates in lipid metabolism; fatty acid biosynthesis. The protein operates within lipid metabolism; mycolic acid biosynthesis. Functionally, catalyzes the condensation reaction of fatty acid synthesis by the addition to an acyl acceptor of two carbons from malonyl-ACP. Catalyzes the first condensation reaction which initiates fatty acid synthesis and may therefore play a role in governing the total rate of fatty acid production. Possesses both acetoacetyl-ACP synthase and acetyl transacylase activities. Its substrate specificity determines the biosynthesis of branched-chain and/or straight-chain of fatty acids. This chain is Mycobacterial beta-ketoacyl-[acyl-carrier-protein] synthase III, found in Mycolicibacterium paratuberculosis (strain ATCC BAA-968 / K-10) (Mycobacterium paratuberculosis).